The primary structure comprises 325 residues: Lipoyl synthase (325 aa).

The [4Fe-4S] cluster site is built by Cys-72, Cys-77, Cys-83, Cys-98, Cys-102, Cys-105, and Ser-312. One can recognise a Radical SAM core domain in the interval 84 to 301 (FSSGTATFMI…AEEGMKMGFK (218 aa)).

The protein belongs to the radical SAM superfamily. Lipoyl synthase family. [4Fe-4S] cluster serves as cofactor.

It is found in the cytoplasm. It catalyses the reaction [[Fe-S] cluster scaffold protein carrying a second [4Fe-4S](2+) cluster] + N(6)-octanoyl-L-lysyl-[protein] + 2 oxidized [2Fe-2S]-[ferredoxin] + 2 S-adenosyl-L-methionine + 4 H(+) = [[Fe-S] cluster scaffold protein] + N(6)-[(R)-dihydrolipoyl]-L-lysyl-[protein] + 4 Fe(3+) + 2 hydrogen sulfide + 2 5'-deoxyadenosine + 2 L-methionine + 2 reduced [2Fe-2S]-[ferredoxin]. Its pathway is protein modification; protein lipoylation via endogenous pathway; protein N(6)-(lipoyl)lysine from octanoyl-[acyl-carrier-protein]: step 2/2. Its function is as follows. Catalyzes the radical-mediated insertion of two sulfur atoms into the C-6 and C-8 positions of the octanoyl moiety bound to the lipoyl domains of lipoate-dependent enzymes, thereby converting the octanoylated domains into lipoylated derivatives. The sequence is that of Lipoyl synthase from Stutzerimonas stutzeri (strain A1501) (Pseudomonas stutzeri).